The chain runs to 240 residues: Sulfite dehydrogenase subunit B (240 aa).

3 consecutive 4Fe-4S ferredoxin-type domains span residues 4 to 34 (LALV…WAGP), 64 to 95 (TETV…KRPD), and 97 to 126 (GVVL…LDAQ). [4Fe-4S] cluster-binding residues include cysteine 13, cysteine 16, cysteine 19, cysteine 23, cysteine 73, cysteine 76, cysteine 81, cysteine 85, cysteine 106, cysteine 109, cysteine 112, and cysteine 116.

As to quaternary structure, forms a heterotrimeric membrane-bound complex composed of a catalytic heterodimer (SoeAB) and a membrane anchor protein (SoeC). The cofactor is [4Fe-4S] cluster.

The protein resides in the cell inner membrane. In terms of biological role, part of the SoeABC complex that catalyzes the oxidation of sulfite to sulfate. SoeB is probably the electron transfer subunit. The protein is Sulfite dehydrogenase subunit B of Allochromatium vinosum (strain ATCC 17899 / DSM 180 / NBRC 103801 / NCIMB 10441 / D) (Chromatium vinosum).